The chain runs to 34 residues: Phallacidin proprotein 1 (34 aa).

Residues 1 to 10 (MSDINATRLP) constitute a propeptide that is removed on maturation. The cyclopeptide (Ala-Pro) cross-link spans 11–17 (AWLVDCP). Residues 12–16 (WLVDC) constitute a cross-link (2'-cysteinyl-6'-hydroxytryptophan sulfoxide (Trp-Cys)). A propeptide spanning residues 18–34 (CVGDDVNRLLTRGESLC) is cleaved from the precursor.

This sequence belongs to the MSDIN fungal toxin family. In terms of processing, processed by the macrocyclase-peptidase enzyme POPB to yield a toxic cyclic heptapeptide. POPB first removes 10 residues from the N-terminus. Conformational trapping of the remaining peptide forces the enzyme to release this intermediate rather than proceed to macrocyclization. The enzyme rebinds the remaining peptide in a different conformation and catalyzes macrocyclization of the N-terminal 7 residues.

Major toxin that belongs to the bicyclic heptapeptides called phallotoxins. Although structurally related to amatoxins, phallotoxins have a different mode of action, which is the stabilization of F-actin. Phallotoxins are poisonous when administered parenterally, but not orally because of poor absorption. In Amanita bisporigera (Destroying angel), this protein is Phallacidin proprotein 1.